The chain runs to 79 residues: MELEAMSRYTSPVNPAVFPHLTVVLLAIGMFFTAWFFVYEVTSTKYTRDIYKELLISLVASLFMGFGVLFLLLWVGIYI.

Methionine 1 is modified (N-acetylmethionine). The next 2 membrane-spanning stretches (helical) occupy residues 17-37 and 59-79; these read VFPH…AWFF and VASL…GIYI.

Belongs to the OST5 family. In terms of assembly, component of the oligosaccharyltransferase (OST) complex. OST exists in two different complex forms which contain common core subunits RPN1, RPN2, OST48, OST4, DAD1 and TMEM258, either STT3A or STT3B as catalytic subunits, and form-specific accessory subunits. STT3A complex assembly occurs through the formation of 3 subcomplexes. Subcomplex 1 contains RPN1 and TMEM258, subcomplex 2 contains the STT3A-specific subunits STT3A, DC2/OSTC, and KCP2 as well as the core subunit OST4, and subcomplex 3 contains RPN2, DAD1, and OST48. The STT3A complex can form stable complexes with the Sec61 complex or with both the Sec61 and TRAP complexes.

Its subcellular location is the membrane. The protein localises to the endoplasmic reticulum. The protein resides in the cytoplasm. Its pathway is protein modification; protein glycosylation. Its function is as follows. Subunit of the oligosaccharyl transferase (OST) complex that catalyzes the initial transfer of a defined glycan (Glc(3)Man(9)GlcNAc(2) in eukaryotes) from the lipid carrier dolichol-pyrophosphate to an asparagine residue within an Asn-X-Ser/Thr consensus motif in nascent polypeptide chains, the first step in protein N-glycosylation. N-glycosylation occurs cotranslationally and the complex associates with the Sec61 complex at the channel-forming translocon complex that mediates protein translocation across the endoplasmic reticulum (ER). All subunits are required for a maximal enzyme activity. Involved in ER homeostasis in the colonic epithelium. This Bos taurus (Bovine) protein is Dolichyl-diphosphooligosaccharide--protein glycosyltransferase subunit TMEM258.